The chain runs to 696 residues: Ribonucleoside-diphosphate reductase subunit beta (696 aa).

Residues Asp97, Glu127, and His130 each coordinate Fe cation. Tyr134 is a catalytic residue. Positions 194 and 228 each coordinate Fe cation. The DOD-type homing endonuclease domain occupies 377 to 507 (DGTIDSKRNG…FVQALCALGG (131 aa)). Fe cation is bound at residue His577.

The protein belongs to the ribonucleoside diphosphate reductase small chain family. As to quaternary structure, tetramer of two alpha and two beta subunits. The cofactor is Fe cation. In terms of processing, this protein undergoes a protein self splicing that involves a post-translational excision of the intervening region (intein) followed by peptide ligation.

The enzyme catalyses a 2'-deoxyribonucleoside 5'-diphosphate + [thioredoxin]-disulfide + H2O = a ribonucleoside 5'-diphosphate + [thioredoxin]-dithiol. Provides the precursors necessary for DNA synthesis. Catalyzes the biosynthesis of deoxyribonucleotides from the corresponding ribonucleotides. This Aquifex aeolicus (strain VF5) protein is Ribonucleoside-diphosphate reductase subunit beta (nrdB).